Reading from the N-terminus, the 616-residue chain is Chaperone protein HscA (616 aa).

The protein belongs to the heat shock protein 70 family.

In terms of biological role, chaperone involved in the maturation of iron-sulfur cluster-containing proteins. Has a low intrinsic ATPase activity which is markedly stimulated by HscB. Involved in the maturation of IscU. The polypeptide is Chaperone protein HscA (Enterobacter sp. (strain 638)).